The primary structure comprises 281 residues: MILTKAQYEEIAQCLVSVPPTRQSLRKLKQRFPSQSQATLLSIFSQEYQKHIKRTHAKHHTPEAIESYYQRYLNGVGKNGAAPVLLELANEVDYAPSLMARIILERFLQGHEQTPPSKSVINSMLRDPSQIPDGVLANQVYQCIVNDCCYGPLVDCIKHAIGYEHEVLLRDLLLKKNLSFLDEDQLRAKGYDKTPDFILQVPVAVEGHIIHWIESKASFGDECSHHAYLHGQFWSYWNRFGPGLVIYWYGFIQELDCNRERGILLKASFPTDIVTLCHSTA.

A Phosphothreonine modification is found at Thr114.

The protein localises to the nucleus. It is found in the cytoplasm. Plays a role in erythroid cell differentiation. The polypeptide is CDAN1-interacting nuclease 1 (Mus musculus (Mouse)).